A 204-amino-acid polypeptide reads, in one-letter code: Probable nicotinate-nucleotide adenylyltransferase (204 aa).

Belongs to the NadD family.

The catalysed reaction is nicotinate beta-D-ribonucleotide + ATP + H(+) = deamido-NAD(+) + diphosphate. Its pathway is cofactor biosynthesis; NAD(+) biosynthesis; deamido-NAD(+) from nicotinate D-ribonucleotide: step 1/1. Its function is as follows. Catalyzes the reversible adenylation of nicotinate mononucleotide (NaMN) to nicotinic acid adenine dinucleotide (NaAD). The chain is Probable nicotinate-nucleotide adenylyltransferase from Dehalococcoides mccartyi (strain ATCC BAA-2100 / JCM 16839 / KCTC 5957 / BAV1).